The chain runs to 319 residues: Malate dehydrogenase (319 aa).

Residues 11–16 (GAGNVG) and aspartate 36 each bind NAD(+). Substrate is bound by residues arginine 85 and arginine 91. NAD(+) contacts are provided by residues asparagine 98 and 121–123 (VSN). Substrate-binding residues include asparagine 123 and arginine 154. Catalysis depends on histidine 178, which acts as the Proton acceptor.

The protein belongs to the LDH/MDH superfamily. MDH type 3 family.

It carries out the reaction (S)-malate + NAD(+) = oxaloacetate + NADH + H(+). Its function is as follows. Catalyzes the reversible oxidation of malate to oxaloacetate. This chain is Malate dehydrogenase, found in Sulfurimonas denitrificans (strain ATCC 33889 / DSM 1251) (Thiomicrospira denitrificans (strain ATCC 33889 / DSM 1251)).